A 66-amino-acid chain; its full sequence is Large ribosomal subunit protein uL30 (66 aa).

Belongs to the universal ribosomal protein uL30 family. As to quaternary structure, part of the 50S ribosomal subunit.

This Chloroherpeton thalassium (strain ATCC 35110 / GB-78) protein is Large ribosomal subunit protein uL30.